The primary structure comprises 551 residues: MRAKNHLQTALKAVVADLELPWPDKVSIEPPKDKKFGDLAANIALVLAKPAAMPPRELAARITERLQQKYPEISGVEIAGPGFINVTYAPDFWHRTVHMVEQAGGRFGSVNVGNGRKVQIEYVSANPTGPLHIGHGRGAAIGDSLARMMRFAGFETSTEYYINDAGRQMLLLGASVYYRAKQIKGLDVAEPEEYYRGDYIRDIASEVLGFTPDLLEKPEEEALAVCQKYAVDTIMAGIRQDLADFSVSHDVWFSEKSLVETGAVDKTFDRLRRSGLAYEEDGALWFRTTDFGDDKNRVLKKSNGYLTYFASDIAYHDNKYDRGFDLCVDIWGADHHGYVPRMRAAVQALGKPADSFDVILVQLVNLLRNGEQVAMSTRAGEFETLADVVKEVGADAARFMFLSRKSDSSLDFDLELVKQRSMDNPVYYVQYAHARICSVLRKAAERGTTPETHSDEELLKPLVHADEIDMLRLVDRFEDTVEAAATSLSVHHISYYLQELASALHRFYANHPVLNAPDEQILKARLALLRAVAQVLRNGLDLLGVSAPEAM.

The 'HIGH' region signature appears at 125–135 (ANPTGPLHIGH).

Belongs to the class-I aminoacyl-tRNA synthetase family. As to quaternary structure, monomer.

The protein localises to the cytoplasm. The catalysed reaction is tRNA(Arg) + L-arginine + ATP = L-arginyl-tRNA(Arg) + AMP + diphosphate. This is Arginine--tRNA ligase from Oleidesulfovibrio alaskensis (strain ATCC BAA-1058 / DSM 17464 / G20) (Desulfovibrio alaskensis).